Here is an 899-residue protein sequence, read N- to C-terminus: Gamma-aminobutyric acid type B receptor subunit 1 (899 aa).

An N-terminal signal peptide occupies residues 1–19 (MFVRSSWLLLWGTIVWASA). Topologically, residues 20–447 (EPVTLHIGGT…KKHAMTVSNE (428 aa)) are extracellular. 5 N-linked (GlcNAc...) asparagine glycosylation sites follow: Asn-69, Asn-266, Asn-339, Asn-353, and Asn-371. A helical transmembrane segment spans residues 448 to 468 (FYYPTILFAVLGIAACVFIYL). The Cytoplasmic portion of the chain corresponds to 469–487 (FTQKHHERLIIFQSQPECN). A helical membrane pass occupies residues 488-508 (NILLIGCSLCLFSLFLIGLPS). Residues 509–525 (DDISISESLFPLLCHAR) are Extracellular-facing. The chain crosses the membrane as a helical span at residues 526–546 (VTILLFGFTFAYGSMFAKVWI). Residues 547–616 (VHRMGATENQ…LNQPISSSKF (70 aa)) lie on the Cytoplasmic side of the membrane. A helical membrane pass occupies residues 617 to 637 (YVIVAALTAVDVFVCFVWVLI). The Extracellular segment spans residues 638 to 674 (DPLHLTEQKFPLFTPADSEEDEMIMPVLQQCQSNQQE). Residues 675 to 695 (VWIGIIMGFKCLLLVFGTFLS) traverse the membrane as a helical segment. Residues 696 to 713 (YETRNLKLRFINDSRFVG) are Cytoplasmic-facing. Residues 714–734 (LAIYNVAVMTLVTAPVVTLLI) form a helical membrane-spanning segment. Over 735 to 741 (HGKVDAN) the chain is Extracellular. A helical membrane pass occupies residues 742–762 (FAFISLTVLICTYISVGLIYG). At 763–899 (PKIRHIIKVP…SSTSSDEILL (137 aa)) the chain is on the cytoplasmic side. Residues 791–842 (KVDQKRYDMLKKENETLQIQIEEKERKIHECKERLEELTKNSETEDMNAQLL) are a coiled coil. Positions 870–899 (DLQNGNHPGQIYENDNDDDGSSTSSDEILL) are disordered. The segment covering 890-899 (SSTSSDEILL) has biased composition (low complexity).

This sequence belongs to the G-protein coupled receptor 3 family. In terms of assembly, may form a heterodimer with gbb-2. In terms of tissue distribution, expressed in the nervous system, including cholinergic motor neurons, but not in GABAergic motor neurons or muscle.

Its subcellular location is the cell membrane. Its function is as follows. Component of a heterodimeric G-protein coupled receptor for GABA, formed by gbb-1 and gbb-2. Within the heterodimeric GABA receptor, only gbb-1 seems to bind agonists, while gbb-2 mediates coupling to G proteins. Ligand binding causes a conformation change that triggers signaling via guanine nucleotide-binding proteins (G proteins) and modulates the activity of down-stream effectors, such as adenylate cyclase. Signaling inhibits adenylate cyclase, stimulates phospholipase A2, activates potassium channels, inactivates voltage-dependent calcium-channels and modulates inositol phospholipid hydrolysis. Calcium is required for high affinity binding to GABA. Plays a critical role in the fine-tuning of inhibitory synaptic transmission. Pre-synaptic GABA receptor inhibits neurotransmitter release by down-regulating high-voltage activated calcium channels, whereas postsynaptic GABA receptor decreases neuronal excitability by activating a prominent inwardly rectifying potassium (Kir) conductance that underlies the late inhibitory postsynaptic potentials. Along with gbb-2, may couple to the G(o)-alpha G-protein goa-1 to negatively regulate cholinergic receptor activity in the presence of high levels of acetylcholine in ventral cord motor neurons. As acetylcholine depolarizes body wall muscles, modulation of acetylcholine levels most likely results in the control of locomotory behavior. Acts in neurons to regulate lifespan, and this may be through G-protein-egl-8/PLC-beta signaling to the transcription factor daf-16/FOXO. The sequence is that of Gamma-aminobutyric acid type B receptor subunit 1 from Caenorhabditis elegans.